The primary structure comprises 531 residues: Beta-hexosaminidase subunit beta (531 aa).

Positions 1–21 (MEVLPGLLRLLAALVVAERWA) are cleaved as a signal peptide. A disulfide bridge links Cys67 with Cys111. N-linked (GlcNAc...) asparagine glycans are attached at residues Asn120, Asn164, and Asn301. Cystine bridges form between Cys283/Cys334 and Cys508/Cys525. Residue Glu329 is the Proton donor of the active site.

Belongs to the glycosyl hydrolase 20 family. As to quaternary structure, there are 3 forms of beta-hexosaminidase: hexosaminidase A is a heterodimer composed of one subunit alpha and one subunit beta (chain A and B); hexosaminidase B is a homodimer of two beta subunits (two chains A and B); hexosaminidase S is a homodimer of two alpha subunits. The composition of the dimer (isozyme A versus isozyme S) has a significant effect on the substrate specificity of the alpha subunit active site.

The protein localises to the lysosome. The protein resides in the cytoplasmic vesicle. Its subcellular location is the secretory vesicle. It localises to the cortical granule. It carries out the reaction Hydrolysis of terminal non-reducing N-acetyl-D-hexosamine residues in N-acetyl-beta-D-hexosaminides.. The enzyme catalyses N-acetyl-beta-D-galactosaminyl-(1-&gt;4)-beta-D-3-sulfogalactosyl-(1-&gt;4)-beta-D-glucosyl-(1&lt;-&gt;1')-ceramide + H2O = a beta-D-3-sulfogalactosyl-(1-&gt;4)-beta-D-glucosyl-(1&lt;-&gt;1')-ceramide + N-acetyl-beta-D-galactosamine. It catalyses the reaction a ganglioside GM2 (d18:1(4E)) + H2O = a ganglioside GM3 (d18:1(4E)) + N-acetyl-beta-D-galactosamine. The catalysed reaction is a ganglioside GM2 + H2O = a ganglioside GM3 + N-acetyl-beta-D-galactosamine. It carries out the reaction beta-D-GalNAc-(1-&gt;4)-alpha-L-IdoA-(1-&gt;3)-beta-D-GalNAc-4-sulfate-(1-&gt;4)-alpha-L-IdoA-(1-&gt;3)-D-GalNAc-4-sulfate + H2O = alpha-L-IdoA-(1-&gt;3)-beta-D-GalNAc-4-sulfate-(1-&gt;4)-alpha-L-IdoA-(1-&gt;3)-D-GalNAc-4-sulfate + N-acetyl-D-galactosamine. The enzyme catalyses N-acetyl-beta-D-6-sulfogalactosaminyl-(1-&gt;4)-alpha-L-iduronyl-(1-&gt;3)-N-acetyl-D-6-sulfogalactosamine + H2O = alpha-L-iduronyl-(1-&gt;3)-N-acetyl-D-6-sulfogalactosamine + N-acetyl-D-6-sulfogalactosamine. Its activity is regulated as follows. Addition of GM2A stimulates the hydrolysis of sulfated glycosphingolipid SM2 and the ganglioside GM2. Its function is as follows. Hydrolyzes the non-reducing end N-acetyl-D-hexosamine and/or sulfated N-acetyl-D-hexosamine of glycoconjugates, such as the oligosaccharide moieties from proteins and neutral glycolipids, or from certain mucopolysaccharides. The isozyme B does not hydrolyze each of these substrates, however hydrolyzes efficiently neutral oligosaccharide. Only the isozyme A is responsible for the degradation of GM2 gangliosides in the presence of GM2A. During fertilization is responsible, at least in part, for the zona block to polyspermy. Present in the cortical granules of non-activated oocytes, is exocytosed during the cortical reaction in response to oocyte activation and inactivates the sperm galactosyltransferase-binding site, accounting for the block in sperm binding to the zona pellucida. This chain is Beta-hexosaminidase subunit beta, found in Sus scrofa (Pig).